Reading from the N-terminus, the 536-residue chain is CTP synthase (536 aa).

The interval 1-267 is amidoligase domain; the sequence is MSKFVFVTGG…CKQTLNCLEL (267 aa). Position 13 (Ser-13) interacts with CTP. Residue Ser-13 participates in UTP binding. Residues 14–19 and Asp-71 each bind ATP; that span reads SIGKGI. Asp-71 and Glu-141 together coordinate Mg(2+). CTP is bound by residues 148-150, 188-193, and Lys-224; these read DIE and KTKPTQ. Residues 188–193 and Lys-224 contribute to the UTP site; that span reads KTKPTQ. One can recognise a Glutamine amidotransferase type-1 domain in the interval 292–534; it reads KVALVGKYIE…IKASQEKLEQ (243 aa). An L-glutamine-binding site is contributed by Gly-354. Cys-381 serves as the catalytic Nucleophile; for glutamine hydrolysis. L-glutamine contacts are provided by residues 382-385, Glu-405, and Arg-462; that span reads LGMQ. Active-site residues include His-507 and Glu-509.

Belongs to the CTP synthase family. In terms of assembly, homotetramer.

It carries out the reaction UTP + L-glutamine + ATP + H2O = CTP + L-glutamate + ADP + phosphate + 2 H(+). It catalyses the reaction L-glutamine + H2O = L-glutamate + NH4(+). The catalysed reaction is UTP + NH4(+) + ATP = CTP + ADP + phosphate + 2 H(+). It functions in the pathway pyrimidine metabolism; CTP biosynthesis via de novo pathway; CTP from UDP: step 2/2. With respect to regulation, allosterically activated by GTP, when glutamine is the substrate; GTP has no effect on the reaction when ammonia is the substrate. The allosteric effector GTP functions by stabilizing the protein conformation that binds the tetrahedral intermediate(s) formed during glutamine hydrolysis. Inhibited by the product CTP, via allosteric rather than competitive inhibition. Functionally, catalyzes the ATP-dependent amination of UTP to CTP with either L-glutamine or ammonia as the source of nitrogen. Regulates intracellular CTP levels through interactions with the four ribonucleotide triphosphates. The sequence is that of CTP synthase from Prochlorococcus marinus subsp. pastoris (strain CCMP1986 / NIES-2087 / MED4).